The primary structure comprises 466 residues: Asparagine--tRNA ligase (466 aa).

The protein belongs to the class-II aminoacyl-tRNA synthetase family. Homodimer.

The protein localises to the cytoplasm. The enzyme catalyses tRNA(Asn) + L-asparagine + ATP = L-asparaginyl-tRNA(Asn) + AMP + diphosphate + H(+). This Myxococcus xanthus (strain DK1622) protein is Asparagine--tRNA ligase.